A 560-amino-acid polypeptide reads, in one-letter code: Leucine-rich repeat and IQ domain-containing protein 4 (560 aa).

The segment at 1 to 20 (MSKDIKSVEHSPKIHQRNDP) is disordered. 20 LRR repeats span residues 23–47 (VNDR…IFTF), 48–70 (TELE…IQRL), 72–95 (NIRV…LLSS), 97–116 (ESLD…VVSF), 117–140 (LHAL…IFKN), 141–164 (LHHL…IVNQ), 166–187 (KLRE…LCVL), 188–210 (YTLE…IGHL), 212–233 (GLQK…LCQC), 234–256 (SQLS…FAEL), 258–281 (KMTE…RWTS), 283–301 (HLLY…SFRC), 302–325 (LVNL…ICAL), 326–348 (KNLE…LGSL), 350–371 (KLKI…VLSL), 374–397 (LEKL…IRKL), 398–422 (QSLK…SMPN), 424–443 (EVLD…ICQA), 444–466 (QALK…LDSL), and 468–489 (NLKV…VCAE). The IQ domain occupies 504 to 533 (RNIMATKIQAWWRGTMVQRGFGKFGELLKP). Residues 529-560 (ELLKPQKKGKTSPKDKKGKKDVKGKPGKGKKK) are disordered. The span at 533–560 (PQKKGKTSPKDKKGKKDVKGKPGKGKKK) shows a compositional bias: basic residues.

This chain is Leucine-rich repeat and IQ domain-containing protein 4 (LRRIQ4), found in Homo sapiens (Human).